Here is a 54-residue protein sequence, read N- to C-terminus: Putative neurotoxin-I (54 aa).

Cystine bridges form between C20-C42, C28-C51, and C32-C53.

In terms of tissue distribution, expressed by the venom gland.

The protein resides in the secreted. This chain is Putative neurotoxin-I, found in Lychas mucronatus (Chinese swimming scorpion).